The chain runs to 289 residues: Phospholipase A1 (289 aa).

An N-terminal signal peptide occupies residues 1 to 20; that stretch reads MRTLQGWLLPVFMLPMAVYA. Residues 21 to 52 lie on the Periplasmic side of the membrane; sequence QEATVKEVHDAPAVRGSIIANMLQEHDNPFTL. Residues 53-65 traverse the membrane as a beta stranded segment; that stretch reads YPYDTNYLIYTQT. The Extracellular portion of the chain corresponds to 66–84; the sequence is SDLNKEAIASYDWAENARK. Residues 85-99 traverse the membrane as a beta stranded segment; it reads DEVKFQLSLAFPLWR. At 100 to 105 the chain is on the periplasmic side; the sequence is GILGPN. A beta stranded membrane pass occupies residues 106 to 118; that stretch reads SVLGASYTQKSWW. The Extracellular portion of the chain corresponds to 119–128; it reads QLSNSEESSP. Serine 126 serves as a coordination point for Ca(2+). A beta stranded membrane pass occupies residues 129–148; that stretch reads FRETNYEPQLFLGFATDYRF. Residues 149–150 lie on the Periplasmic side of the membrane; that stretch reads AG. The chain crosses the membrane as a beta stranded span at residues 151 to 164; sequence WTLRDVEMGYNHDS. The active-site Proton acceptor is the histidine 162. Catalysis depends on serine 164, which acts as the Nucleophile. The Extracellular segment spans residues 165–173; it reads NGRSDPTSR. Ca(2+) is bound by residues arginine 167 and serine 172. The beta stranded transmembrane segment at 174 to 186 threads the bilayer; that stretch reads SWNRLYTRLMAEN. At 187–188 the chain is on the periplasmic side; that stretch reads GN. Residues 189–198 traverse the membrane as a beta stranded segment; that stretch reads WLVEVKPWYV. The Extracellular portion of the chain corresponds to 199–216; that stretch reads VGNTDDNPDITKYMGYYQ. A Ca(2+)-binding site is contributed by aspartate 204. A beta stranded membrane pass occupies residues 217–223; that stretch reads LKIGYHL. Topologically, residues 224–225 are periplasmic; the sequence is GD. Residues 226–234 form a beta stranded membrane-spanning segment; it reads AVLSAKGQY. Over 235–241 the chain is Extracellular; it reads NWNTGYG. Residues 242-250 traverse the membrane as a beta stranded segment; the sequence is GAELGLSYP. The Periplasmic portion of the chain corresponds to 251–255; that stretch reads ITKHV. Residues 256 to 265 traverse the membrane as a beta stranded segment; that stretch reads RLYTQVYSGY. Over 266 to 274 the chain is Extracellular; it reads GESLIDYNF. A beta stranded membrane pass occupies residues 275–286; the sequence is NQTRVGVGVMLN. Topologically, residues 287-289 are periplasmic; that stretch reads DLF.

It belongs to the phospholipase A1 family. In terms of assembly, homodimer; dimerization is reversible, and the dimeric form is the active one. Ca(2+) serves as cofactor.

The protein resides in the cell outer membrane. It carries out the reaction a 1,2-diacyl-sn-glycero-3-phosphocholine + H2O = a 2-acyl-sn-glycero-3-phosphocholine + a fatty acid + H(+). The enzyme catalyses a 1,2-diacyl-sn-glycero-3-phosphocholine + H2O = a 1-acyl-sn-glycero-3-phosphocholine + a fatty acid + H(+). Hydrolysis of phosphatidylcholine with phospholipase A2 (EC 3.1.1.4) and phospholipase A1 (EC 3.1.1.32) activities. This Escherichia coli O157:H7 protein is Phospholipase A1 (pldA).